We begin with the raw amino-acid sequence, 835 residues long: Serine/threonine-protein kinase TNNI3K (835 aa).

Glycine 2 carries the N-myristoyl glycine lipid modification. Residues 21–50 (SESYAIIIERLEDNLQIKENEFQELRHIFG) adopt a coiled-coil conformation. ANK repeat units follow at residues 66–96 (RGLS…RPSR), 100–129 (NGFP…DVQQ), 133–162 (GGLT…NVNV), 166–195 (VFFT…DVNV), 199–228 (VGDR…KADV), 234–263 (EDHV…EVQP), 269–298 (YGDT…TESL), 304–335 (FSET…NINH), 339–368 (DGHT…DMNL), and 381–410 (DEQT…PQEE). In terms of domain architecture, Protein kinase spans 463-723 (IEFHEIIGSG…EVVSKLEECL (261 aa)). Residues 469–477 (IGSGSFGKV) and lysine 490 each bind ATP. The active-site Proton acceptor is the aspartate 588.

This sequence belongs to the protein kinase superfamily. TKL Ser/Thr protein kinase family. MAP kinase kinase kinase subfamily. Interacts with TNNI3, ACTC, ACTA1, MYBPC3, AIP, FABP3 and HADHB. Requires Mg(2+) as cofactor. In terms of processing, autophosphorylated.

Its subcellular location is the nucleus. The protein localises to the cytoplasm. The catalysed reaction is L-seryl-[protein] + ATP = O-phospho-L-seryl-[protein] + ADP + H(+). The enzyme catalyses L-threonyl-[protein] + ATP = O-phospho-L-threonyl-[protein] + ADP + H(+). Functionally, may play a role in cardiac physiology. In Rattus norvegicus (Rat), this protein is Serine/threonine-protein kinase TNNI3K.